The chain runs to 153 residues: Putative trans-acting regulator pXO2-62/BXB0076/GBAA_pXO2_0076 (153 aa).

This sequence belongs to the AtxA/AcpA family.

The protein is Putative trans-acting regulator pXO2-62/BXB0076/GBAA_pXO2_0076 of Bacillus anthracis.